A 90-amino-acid chain; its full sequence is Large ribosomal subunit protein bL27 (90 aa).

The tract at residues 1 to 24 (MAHKKGTGSTRNGRDSNSKRLGVK) is disordered.

This sequence belongs to the bacterial ribosomal protein bL27 family.

This is Large ribosomal subunit protein bL27 from Prochlorococcus marinus (strain NATL1A).